A 633-amino-acid polypeptide reads, in one-letter code: MINVYFSDNSCKQFLPGIKGSDIITHLFPELLNKAIAIKINDKSLDLSTEITEDCKFEVITLDSDEGLDIIRHDTAHIMAQAIKEMFPEVKTVVGPTIKDGFYYDFSTDHIFSSNELEKIEEKMREIIKKNESFIREVWTREEAIRFFSNKGEDYKVKIIAKIPIHENITVYKQGSFIDLCRGPHAPSTKISKAFKLTKVSGSYWEGNTNNAQLQRIYGTAWRTEEELKLYLNNLIEVEKRDHRKIGKELELFHIQNEALGQIFWHEKGLIIYRIIENYIRKKLENNGYIEVKTPYLLSKTLWEQSGHWDKFREHMFLSEIDNKVVAIKPMNCPCHVQIFNSKIRSYKDLPLRMAEFGTCHRYEASGALHGLMRVRSFTQDDAHIFCTEDQIIEEALKFCNLLMEVYEVFGFKDILVKFSDRPEKRAGSDKIWDKAEEALKASVKAANLNYVLNPGDGAFYGPKLEFTLKDAIGREWQCGTLQMDFVLPERLGAYYTGSDGKKHHPIMLHRAILGTIERFIGILIEHHSGKLPIWLAPVQLSILTITEDAIDYAISLKHKAMKQNIRAEVDITNEKINYKIRSHISKKIPVLWIIGKKEIETESVSIRYLESKDQHIMSSDKALKTLLSCASI.

One can recognise a TGS domain in the interval 1–61 (MINVYFSDNS…TEDCKFEVIT (61 aa)). The segment at 242–533 (DHRKIGKELE…LIEHHSGKLP (292 aa)) is catalytic. The Zn(2+) site is built by Cys-333, His-384, and His-510.

Belongs to the class-II aminoacyl-tRNA synthetase family. In terms of assembly, homodimer. Zn(2+) is required as a cofactor.

It localises to the cytoplasm. It carries out the reaction tRNA(Thr) + L-threonine + ATP = L-threonyl-tRNA(Thr) + AMP + diphosphate + H(+). Its function is as follows. Catalyzes the attachment of threonine to tRNA(Thr) in a two-step reaction: L-threonine is first activated by ATP to form Thr-AMP and then transferred to the acceptor end of tRNA(Thr). Also edits incorrectly charged L-seryl-tRNA(Thr). The sequence is that of Threonine--tRNA ligase from Ehrlichia ruminantium (strain Gardel).